A 211-amino-acid chain; its full sequence is Probable GTP-binding protein EngB (211 aa).

The EngB-type G domain occupies 13–188 (SGYEIAFAGR…ASVMAGRLHF (176 aa)). Residues 21–28 (GRSNAGKS), 48–52 (GRTQM), 67–70 (DLPG), 134–137 (TKAD), and 167–169 (FSS) contribute to the GTP site. Mg(2+) is bound by residues serine 28 and threonine 50.

This sequence belongs to the TRAFAC class TrmE-Era-EngA-EngB-Septin-like GTPase superfamily. EngB GTPase family. Mg(2+) is required as a cofactor.

In terms of biological role, necessary for normal cell division and for the maintenance of normal septation. The sequence is that of Probable GTP-binding protein EngB from Acinetobacter baumannii (strain ATCC 17978 / DSM 105126 / CIP 53.77 / LMG 1025 / NCDC KC755 / 5377).